Consider the following 178-residue polypeptide: GTP-dependent dephospho-CoA kinase (178 aa).

GTP is bound by residues D43, I44, V45, D62, K64, and E120.

It belongs to the GTP-dependent DPCK family.

It carries out the reaction 3'-dephospho-CoA + GTP = GDP + CoA + H(+). Its pathway is cofactor biosynthesis; coenzyme A biosynthesis. Catalyzes the GTP-dependent phosphorylation of the 3'-hydroxyl group of dephosphocoenzyme A to form coenzyme A (CoA). In Natronomonas pharaonis (strain ATCC 35678 / DSM 2160 / CIP 103997 / JCM 8858 / NBRC 14720 / NCIMB 2260 / Gabara) (Halobacterium pharaonis), this protein is GTP-dependent dephospho-CoA kinase.